The chain runs to 81 residues: ATP synthase subunit c (81 aa).

2 helical membrane passes run 14 to 34 (YLGA…IGTV) and 60 to 80 (LAFA…LLFV).

The protein belongs to the ATPase C chain family. F-type ATPases have 2 components, F(1) - the catalytic core - and F(0) - the membrane proton channel. F(1) has five subunits: alpha(3), beta(3), gamma(1), delta(1), epsilon(1). F(0) has three main subunits: a(1), b(2) and c(10-14). The alpha and beta chains form an alternating ring which encloses part of the gamma chain. F(1) is attached to F(0) by a central stalk formed by the gamma and epsilon chains, while a peripheral stalk is formed by the delta and b chains.

It localises to the cell membrane. Functionally, f(1)F(0) ATP synthase produces ATP from ADP in the presence of a proton or sodium gradient. F-type ATPases consist of two structural domains, F(1) containing the extramembraneous catalytic core and F(0) containing the membrane proton channel, linked together by a central stalk and a peripheral stalk. During catalysis, ATP synthesis in the catalytic domain of F(1) is coupled via a rotary mechanism of the central stalk subunits to proton translocation. Its function is as follows. Key component of the F(0) channel; it plays a direct role in translocation across the membrane. A homomeric c-ring of between 10-14 subunits forms the central stalk rotor element with the F(1) delta and epsilon subunits. This chain is ATP synthase subunit c, found in Clostridium acetobutylicum (strain ATCC 824 / DSM 792 / JCM 1419 / IAM 19013 / LMG 5710 / NBRC 13948 / NRRL B-527 / VKM B-1787 / 2291 / W).